Here is a 584-residue protein sequence, read N- to C-terminus: uncharacterized protein (584 aa).

Disordered stretches follow at residues 123–156 (LSCSSSSPSSSSSSSSSSPRLISTPPIISTPSSP), 209–264 (KIVT…INGG), and 355–479 (STQL…ITPT). Low complexity-rich tracts occupy residues 237–260 (SLSFKSPCSSPSSSSSSTTTPKSS) and 366–376 (SISAATTTTIT). Polar residues-rich tracts occupy residues 377 to 388 (PHNNNSTMTTKT) and 395 to 419 (DTSNLSTPKSTSSTINKAFTTSTTP). The segment covering 425–479 (MSMTPLSSSSSSSTTPSKFINPLPSSSSKTTTTITNSKRLSTLSKPSPITPITPT) has biased composition (low complexity).

This is an uncharacterized protein from Dictyostelium discoideum (Social amoeba).